Reading from the N-terminus, the 377-residue chain is MDSDILVSRTRTATIAQGATGYLMIDLAALGRNYRKLVSMLAPVRAGAVVKADAYGLGAERVARTLYSEGCRHFFVAQFVEAVRLRPALAHDAQIFVLNGLQPGNEIACAEMGIVPVLNSLAQWRQWSAAARILKRCLPAVLQFDTGMSRLGFPREERRELAAALRDGSNVEILFIMSHLASADDMGSEQNGEQFAEMSRIADEFPGFDISFANSGGVFLGEAYYGVLARPGIALYGGAPNAGEKNPMEPVVSLNVAVVQTRTVPAGAKVGYGGAHVTQRETRLATIAAGYADGLPRCLSDRGAVYFKGVRLPIVGRVSMDSTTVDITALPEGALTFGSLVEVLGRHQTLEDIARDAGTISYEILTGLGDRYDRQYR.

The active-site Proton acceptor; specific for D-alanine is the Lys-51. Position 51 is an N6-(pyridoxal phosphate)lysine (Lys-51). Arg-150 is a binding site for substrate. The Proton acceptor; specific for L-alanine role is filled by Tyr-272. Substrate is bound at residue Met-320.

Belongs to the alanine racemase family. It depends on pyridoxal 5'-phosphate as a cofactor.

It carries out the reaction L-alanine = D-alanine. Isomerizes L-alanine to D-alanine which is then oxidized to pyruvate by DadA. This chain is Alanine racemase, catabolic (dadX), found in Rhizobium johnstonii (strain DSM 114642 / LMG 32736 / 3841) (Rhizobium leguminosarum bv. viciae).